The following is an 81-amino-acid chain: Cytotoxin 3b (81 aa).

The first 21 residues, 1 to 21, serve as a signal peptide directing secretion; that stretch reads MKTLLLTLVVVTIVCLDLGYT. Cystine bridges form between Cys24-Cys42, Cys35-Cys59, Cys63-Cys74, and Cys75-Cys80.

It belongs to the three-finger toxin family. Short-chain subfamily. Type IA cytotoxin sub-subfamily. In terms of assembly, monomer in solution; Homodimer and oligomer in the presence of negatively charged lipids forming a pore with a size ranging between 20 and 30 Angstroms. Expressed by the venom gland.

The protein localises to the secreted. It is found in the target cell membrane. Functionally, shows cytolytic activity on many different cells by forming pore in lipid membranes. In vivo, increases heart rate or kills the animal by cardiac arrest. In addition, it binds to heparin with high affinity, interacts with Kv channel-interacting protein 1 (KCNIP1) in a calcium-independent manner, and binds to integrin alpha-V/beta-3 (ITGAV/ITGB3) with moderate affinity. In Naja atra (Chinese cobra), this protein is Cytotoxin 3b.